Consider the following 211-residue polypeptide: Stromal cell-derived factor 2 (211 aa).

The N-terminal stretch at 1-18 is a signal peptide; that stretch reads MAVVPLLLLGGLWSAVGA. MIR domains lie at 21 to 75, 83 to 138, and 139 to 193; these read LGVV…IRGK, GTPI…VLCN, and GPYW…AMEG.

It localises to the secreted. The sequence is that of Stromal cell-derived factor 2 (SDF2) from Homo sapiens (Human).